A 408-amino-acid polypeptide reads, in one-letter code: D-galactonate dehydratase family member OG2516_05608 (408 aa).

Residue D215 participates in Mg(2+) binding. H217 contacts D-arabinonate. Positions 241 and 267 each coordinate Mg(2+). D-arabinonate-binding residues include E267, R288, H317, and E344.

It belongs to the mandelate racemase/muconate lactonizing enzyme family. GalD subfamily.

In terms of biological role, has no detectable activity with D-mannonate and with a panel of 70 other acid sugars (in vitro), in spite of the conservation of the residues that are expected to be important for catalytic activity and cofactor binding. May have evolved a divergent function. The polypeptide is D-galactonate dehydratase family member OG2516_05608 (Oceanicola granulosus (strain ATCC BAA-861 / DSM 15982 / KCTC 12143 / HTCC2516)).